A 150-amino-acid polypeptide reads, in one-letter code: Putative pre-16S rRNA nuclease (150 aa).

Belongs to the YqgF nuclease family.

The protein resides in the cytoplasm. Its function is as follows. Could be a nuclease involved in processing of the 5'-end of pre-16S rRNA. The sequence is that of Putative pre-16S rRNA nuclease from Syntrophus aciditrophicus (strain SB).